Consider the following 141-residue polypeptide: Transcription antitermination protein NusB (141 aa).

This sequence belongs to the NusB family.

Its function is as follows. Involved in transcription antitermination. Required for transcription of ribosomal RNA (rRNA) genes. Binds specifically to the boxA antiterminator sequence of the ribosomal RNA (rrn) operons. The sequence is that of Transcription antitermination protein NusB from Treponema pallidum (strain Nichols).